Reading from the N-terminus, the 1503-residue chain is Transient receptor potential cation channel subfamily M member 2 (1503 aa).

Residues 1-20 (MEPSALRKAGSEQEEGFEGL) form a disordered region. The Cytoplasmic segment spans residues 1–752 (MEPSALRKAG…WWGQLSVDNG (752 aa)). Positions 174, 179, 302, 333, and 336 each coordinate ADP-D-ribose. Thr740 bears the Phosphothreonine mark. Residues 753 to 769 (LWRVTLCMLAFPLLLTG) lie within the membrane without spanning it. Residues 770–795 (LISFREKRLQDVGTPAARARAFFTAP) are Cytoplasmic-facing. Residues 796-816 (VVVFHLNILSYFAFLCLFAYV) form a helical membrane-spanning segment. Topologically, residues 817–827 (LMVDFQPVPSW) are extracellular. Residues 828–848 (CECAIYLWLFSLVCEEMRQLF) form a helical membrane-spanning segment. 2 residues coordinate Ca(2+): Glu843 and Gln846. Residues 849 to 867 (YDPDECGLMKKAALYFSDF) are Cytoplasmic-facing. The helical transmembrane segment at 868–888 (WNKLDVGAILLFVAGLTCRLI) threads the bilayer. Asn869 provides a ligand contact to Ca(2+). The Extracellular portion of the chain corresponds to 889 to 896 (PATLYPGR). A helical transmembrane segment spans residues 897 to 917 (VILSLDFILFCLRLMHIFTIS). Over 918–929 (KTLGPKIIIVKR) the chain is Cytoplasmic. A helical membrane pass occupies residues 930-950 (MMKDVFFFLFLLAVWVVSFGV). Topologically, residues 951–970 (AKQAILIHNERRVDWLFRGA) are extracellular. An intramembrane region (pore-forming) is located at residues 971–985 (VYHSYLTIFGQIPGY). Residues 979–982 (FGQI) carry the Selectivity filter motif. Residues 986–1022 (IDGVNFNPEHCSPNGTDPYKPKCPESDATQQRPAFPE) lie on the Extracellular side of the membrane. The cysteines at positions 996 and 1008 are disulfide-linked. The chain crosses the membrane as a helical span at residues 1023 to 1044 (WLTVLLLCLYLLFTNILLLNLL). Residues 1045–1079 (IAMFNYTFQQVQEHTDQIWKFQRHDLIEEYHGRPA) are Cytoplasmic-facing. Glu1073 lines the Ca(2+) pocket. An intramembrane segment occupies 1080-1098 (APPPFILLSHLQLFIKRVV). The Cytoplasmic portion of the chain corresponds to 1099–1503 (LKTPAKRHKQ…KAAAEFGAHY (405 aa)). The tract at residues 1206 to 1237 (EADVPTLASQKAAEEPDAEPGGRKKTEEPGDS) is disordered. A Nudix hydrolase domain is found at 1354 to 1498 (RWRRNEDGAI…KTLLQKAAAE (145 aa)). Positions 1381 and 1382 each coordinate ADP-D-ribose. Residues 1390–1411 (GSREPGEMLPRKLKRILRQEHW) carry the Nudix box motif. The ADP-D-ribose site is built by Asp1431, Arg1433, Tyr1485, and Asn1487.

Belongs to the transient receptor (TC 1.A.4) family. LTrpC subfamily. TRPM2 sub-subfamily. As to quaternary structure, homotetramer. Isoform 1 can interact with isoform 3. This interaction decreases Ca(2+) influx through isoform 1 and suppresses susceptibility to oxidative stress-induced cell death. Post-translationally, phosphorylation of TRPM2 at Thr-740 by protein kinase C (PKC) counteracts the effect of cytosolic Ca(2+) and elevates the temperature threshold. In terms of tissue distribution, highly expressed in brain and peripheral blood cells, such as neutrophils. Also detected in bone marrow, spleen, heart, liver and lung. Isoform 2 is found in neutrophil granulocytes.

The protein resides in the cell membrane. It localises to the perikaryon. Its subcellular location is the cell projection. The protein localises to the cytoplasmic vesicle. It is found in the lysosome. The enzyme catalyses Ca(2+)(in) = Ca(2+)(out). It catalyses the reaction Na(+)(in) = Na(+)(out). Its activity is regulated as follows. Activated by intracellular ADP-ribose, beta-NAD (NAD(+)) and similar compounds, and by oxidative stress caused by reactive oxygen or nitrogen species. Ca(2+) and PI(4,5)P2 are required for channel opening by ADP-ribose. Activation by ADP-ribose and beta-NAD is strongly increased by moderate heat (35 to 40 degrees Celsius). Likewise, reactive oxygen species lower the threshold for activation by moderate heat (37 degrees Celsius). Activated by moderate heat (35 to 40 degrees Celsius). Inactivated by exposure to extracellular pH between 4.0 and 6.5; irreversibly inactivated when open channels are exposed to extracellular pH between 4.0 and 6.5, while pre-exposure of closed channels to extracellular pH 5.5 gives rise to currents that rapidly inactivate, but protects against irreversible inactivation. Inactivated by intracellular ATP. Activated by arachidonic acid. Inhibited by 2-aminoethyl diphenylborinate (2-APB). In terms of biological role, nonselective, voltage-independent cation channel that mediates Na(+) and Ca(2+) influx, leading to increased cytoplasmic Ca(2+) levels. Functions as a ligand-gated ion channel, gated by intracellular adenosine diphosphate ribose (ADP-ribose), Ca(2+), warm temperature, and oxidative stress. The precise physiological activators are under debate; the true, physiological activators may be ADP-ribose and ADP-ribose-2'-phosphate. Binding of ADP-ribose to the cytoplasmic Nudix domain causes a conformation change; the channel is primed but still requires Ca(2+) binding to trigger channel opening. Extracellular Ca(2+) passes through the channel and increases channel activity. Contributes to Ca(2+) release from intracellular stores in response to ADP-ribose. Plays a role in numerous processes that involve signaling via intracellular Ca(2+) levels. Besides, mediates the release of lysosomal Zn(2+) stores in response to reactive oxygen species, leading to increased cytosolic Zn(2+) levels. Plays a role in mediating behavorial and physiological responses to moderate heat and thereby contributes to body temperature homeostasis. Plays a role in insulin secretion, a process that requires increased cytoplasmic Ca(2+) levels. Required for normal IFNG and cytokine secretion and normal innate immune immunity in response to bacterial infection. Required for normal phagocytosis and cytokine release by macrophages exposed to zymosan (in vitro). Plays a role in dendritic cell differentiation and maturation, and in dendritic cell chemotaxis via its role in regulating cytoplasmic Ca(2+) levels. Plays a role in the regulation of the reorganization of the actin cytoskeleton and filopodia formation in response to reactive oxygen species via its role in increasing cytoplasmic Ca(2+) and Zn(2+) levels. Confers susceptibility to cell death following oxidative stress. Its function is as follows. Lacks cation channel activity. Does not mediate cation transport in response to oxidative stress or ADP-ribose. Functionally, lacks cation channel activity and negatively regulates the channel activity of isoform 1. Negatively regulates susceptibility to cell death in reposponse to oxidative stress. The chain is Transient receptor potential cation channel subfamily M member 2 (TRPM2) from Homo sapiens (Human).